A 536-amino-acid polypeptide reads, in one-letter code: UDP-N-acetylmuramate--L-alanine ligase (536 aa).

133-139 provides a ligand contact to ATP; the sequence is GSSGKTT.

It belongs to the MurCDEF family.

The protein resides in the cytoplasm. The catalysed reaction is UDP-N-acetyl-alpha-D-muramate + L-alanine + ATP = UDP-N-acetyl-alpha-D-muramoyl-L-alanine + ADP + phosphate + H(+). It functions in the pathway cell wall biogenesis; peptidoglycan biosynthesis. Its function is as follows. Cell wall formation. The sequence is that of UDP-N-acetylmuramate--L-alanine ligase from Wolbachia sp. subsp. Brugia malayi (strain TRS).